Consider the following 361-residue polypeptide: Phospho-N-acetylmuramoyl-pentapeptide-transferase (361 aa).

10 helical membrane-spanning segments follow: residues 26–46 (AILG…VMIR), 73–93 (TMGG…WADL), 97–117 (YVWV…VDDY), 134–154 (YFWQ…TASM), 168–188 (VSLT…IVGS), 200–220 (GLAI…AYLS), 237–257 (TGEL…FLWF), 264–284 (VFMG…VAVI), 289–309 (IVLF…ILQV), and 340–360 (IVRF…SLKI).

Belongs to the glycosyltransferase 4 family. MraY subfamily. Mg(2+) serves as cofactor.

Its subcellular location is the cell inner membrane. It catalyses the reaction UDP-N-acetyl-alpha-D-muramoyl-L-alanyl-gamma-D-glutamyl-meso-2,6-diaminopimeloyl-D-alanyl-D-alanine + di-trans,octa-cis-undecaprenyl phosphate = di-trans,octa-cis-undecaprenyl diphospho-N-acetyl-alpha-D-muramoyl-L-alanyl-D-glutamyl-meso-2,6-diaminopimeloyl-D-alanyl-D-alanine + UMP. The protein operates within cell wall biogenesis; peptidoglycan biosynthesis. Functionally, catalyzes the initial step of the lipid cycle reactions in the biosynthesis of the cell wall peptidoglycan: transfers peptidoglycan precursor phospho-MurNAc-pentapeptide from UDP-MurNAc-pentapeptide onto the lipid carrier undecaprenyl phosphate, yielding undecaprenyl-pyrophosphoryl-MurNAc-pentapeptide, known as lipid I. The sequence is that of Phospho-N-acetylmuramoyl-pentapeptide-transferase from Marinobacter nauticus (strain ATCC 700491 / DSM 11845 / VT8) (Marinobacter aquaeolei).